The primary structure comprises 87 residues: Xibalbin-2 (87 aa).

An N-terminal signal peptide occupies residues 1-25 (MKGVCTRKVLYFFMAVILFVAIVAS). Positions 26–45 (EDTENRNPAMAMPLQRMEQE) are excised as a propeptide.

This sequence belongs to the xibalbin-2 family. Contains 5 disulfide bonds. In terms of tissue distribution, expressed by the venom gland. Not found in the whole body.

Its subcellular location is the secreted. Its function is as follows. Probable neurotoxin. Moderately inhibits voltage-gated potassium channels (Kv1.1/KCNA1, Kv1.2/KCNA2, Kv1.3/KCNA3, and Kv1.6/KCNA6, with the highest toxicity against Kv1.6 (73.2% inhibition at 1 uM)) and weakly inhibits sodium channels (Nav1.4/SCN4A). Does not activate protein kinase A type II (PKA-II) and MAP kinase Erk1/2 in sensory neurons. Does not show cytotoxic activity. Does not have an impact on Ca2+, cAMP, and NO signaling in the cell types analyzed. Does not interfere with the adhesion of leukocytes to endothelial cells. Functionally, moderately inhibits voltage-gated potassium channels (Kv1.1/KCNA1, Kv1.2/KCNA2, Kv1.3/KCNA3, and Kv1.6/KCNA6, with the highest toxicity against Kv1.6 (75.9% inhibition at 1 uM)). Does not activate protein kinase A type II (PKA-II) and MAP kinase Erk1/2 in sensory neurons. Does not show cytotoxic activity. Does not have an impact on Ca2+, cAMP, and NO signaling in the cell types analyzed. Does not interfere with the adhesion of leukocytes to endothelial cells. The chain is Xibalbin-2 from Xibalbanus tulumensis (Blind cave remipede).